The primary structure comprises 291 residues: Putative fatty acid elongase 4 (291 aa).

3 consecutive transmembrane segments (helical) span residues 46 to 66 (ILFQ…FILI), 79 to 99 (FTLK…SIIA), and 254 to 274 (NLYL…QFFV).

It belongs to the ELO family.

Its subcellular location is the membrane. The enzyme catalyses a very-long-chain acyl-CoA + malonyl-CoA + H(+) = a very-long-chain 3-oxoacyl-CoA + CO2 + CoA. It functions in the pathway lipid metabolism; fatty acid biosynthesis. Could be implicated in synthesis of very long chain fatty acids. This chain is Putative fatty acid elongase 4 (elo-4), found in Caenorhabditis elegans.